The following is a 349-amino-acid chain: Core protein VP7 (349 aa).

An N-linked (GlcNAc...) asparagine; by host glycan is attached at N287.

It belongs to the orbivirus VP7 family. In terms of assembly, homotrimer that assemble in a complex of 260 capsomers on an inner scaffold composed of VP3.

It localises to the virion. The VP7 protein is one of the five proteins (with VP1, VP3, VP4, and VP6) which form the inner capsid of the virus. The sequence is that of Core protein VP7 (Segment-7) from Antilocapra americana (Pronghorn).